The following is a 340-amino-acid chain: Uroporphyrinogen decarboxylase (340 aa).

Residues 21-25 (RQAGR), D71, Y148, S203, and H316 each bind substrate.

This sequence belongs to the uroporphyrinogen decarboxylase family. Homodimer.

Its subcellular location is the cytoplasm. It catalyses the reaction uroporphyrinogen III + 4 H(+) = coproporphyrinogen III + 4 CO2. It participates in porphyrin-containing compound metabolism; protoporphyrin-IX biosynthesis; coproporphyrinogen-III from 5-aminolevulinate: step 4/4. Its function is as follows. Catalyzes the decarboxylation of four acetate groups of uroporphyrinogen-III to yield coproporphyrinogen-III. This chain is Uroporphyrinogen decarboxylase, found in Campylobacter concisus (strain 13826).